The primary structure comprises 96 residues: Large ribosomal subunit protein bL27 (96 aa).

A propeptide spanning residues 1-9 is cleaved from the precursor; that stretch reads MLRLDLQFF. Positions 14-35 are disordered; sequence GVGSTKNGRDSQSKRLGAKRAD.

Belongs to the bacterial ribosomal protein bL27 family. Post-translationally, the N-terminus is cleaved by ribosomal processing cysteine protease Prp.

In Bacillus cytotoxicus (strain DSM 22905 / CIP 110041 / 391-98 / NVH 391-98), this protein is Large ribosomal subunit protein bL27.